A 393-amino-acid polypeptide reads, in one-letter code: Chalcone synthase G (393 aa).

Residue Cys-164 is part of the active site.

It belongs to the thiolase-like superfamily. Chalcone/stilbene synthases family. As to expression, expressed in seedlings after illumination with UV light. No expression detectable in flowers. It is not known for sure whether CHSG encodes a chalcone synthase or a very closely related condensing enzyme.

The catalysed reaction is (E)-4-coumaroyl-CoA + 3 malonyl-CoA + 3 H(+) = 2',4,4',6'-tetrahydroxychalcone + 3 CO2 + 4 CoA. Its pathway is secondary metabolite biosynthesis; flavonoid biosynthesis. Its function is as follows. The primary product of this enzyme is 4,2',4',6'-tetrahydroxychalcone (also termed naringenin-chalcone or chalcone) which can under specific conditions spontaneously isomerize into naringenin. This chain is Chalcone synthase G (CHSG), found in Petunia hybrida (Petunia).